Reading from the N-terminus, the 174-residue chain is Photosystem I assembly protein Ycf4 (174 aa).

The next 2 helical transmembrane spans lie at 11 to 31 (LSNIFWALTITLGGLGFFLNG) and 56 to 76 (IILMFYGTVALILGLFLCLTI).

Belongs to the Ycf4 family.

It is found in the plastid. Its subcellular location is the chloroplast thylakoid membrane. Functionally, seems to be required for the assembly of the photosystem I complex. The polypeptide is Photosystem I assembly protein Ycf4 (Emiliania huxleyi (Coccolithophore)).